The primary structure comprises 575 residues: Transcription factor COE2 (575 aa).

Residues 62–65 (RKSN) form an interaction with DNA region. The C5-type zinc-finger motif lies at 150–169 (CRVLLTHEVMCSRCCEKKSC). Interaction with DNA stretches follow at residues 196–203 (NCLKTAGN) and 235–238 (NNSK). In terms of domain architecture, IPT/TIG spans 253-336 (PCIKAISPSE…KGAPGRFIYT (84 aa)). Over residues 441–453 (STQGNNQGYIRNT) the composition is skewed to polar residues. The interval 441–479 (STQGNNQGYIRNTSSISPRGYSSSSTPQQSNYSTSSNSM) is disordered. Over residues 454 to 479 (SSISPRGYSSSSTPQQSNYSTSSNSM) the composition is skewed to low complexity.

This sequence belongs to the COE family. Forms either a homodimer or a heterodimer with a related family member. Interacts with SIX1.

It localises to the nucleus. Transcription factor that, in osteoblasts, activates the decoy receptor for RANKL, TNFRSF11B, which in turn regulates osteoclast differentiation. Acts in synergy with the Wnt-responsive LEF1/CTNNB1 pathway. Recognizes variations of the palindromic sequence 5'-ATTCCCNNGGGAATT-3'. This is Transcription factor COE2 (EBF2) from Bos taurus (Bovine).